Here is a 210-residue protein sequence, read N- to C-terminus: Glutathione S-transferase 3 (210 aa).

Residues 1 to 80 form the GST N-terminal domain; that stretch reads MDFYYLPLSA…YLVEKYGKQN (80 aa). Glutathione-binding positions include Ser9, 50–52, and 64–66; these read HTI and ESR. Positions 87–208 constitute a GST C-terminal domain; sequence CPKKRALINQ…AGCLEMKKYF (122 aa).

It belongs to the GST superfamily. Theta family. As to quaternary structure, homodimer.

It catalyses the reaction RX + glutathione = an S-substituted glutathione + a halide anion + H(+). In terms of biological role, conjugation of reduced glutathione to a wide number of exogenous and endogenous hydrophobic electrophiles. The polypeptide is Glutathione S-transferase 3 (Gst3) (Musca domestica (House fly)).